Here is a 453-residue protein sequence, read N- to C-terminus: Flap endonuclease 1 (453 aa).

The segment at 1 to 105 is N-domain; that stretch reads MGIKGLTGLL…SVLAKRFARR (105 aa). Asp34 provides a ligand contact to Mg(2+). DNA-binding residues include Arg47 and Arg71. Asp87, Glu159, Glu161, Asp180, and Asp182 together coordinate Mg(2+). The I-domain stretch occupies residues 123–254; it reads DVDKLARRQV…KTALKLMREH (132 aa). Glu159 serves as a coordination point for DNA. The DNA site is built by Gly232 and Asp234. Asp234 is a Mg(2+) binding site. 2 disordered regions span residues 273 to 336 and 409 to 453; these read EEIK…VASS and RLDG…KSKN. The segment covering 320-333 has biased composition (basic residues); sequence KSPKKKAPAKKKKV. Residues 406–414 form an interaction with PCNA region; it reads QQGRLDGFF. Basic and acidic residues predominate over residues 417–446; that stretch reads KPKEPAAKDTGKGKGKATKGEKRKAEEKGS.

It belongs to the XPG/RAD2 endonuclease family. FEN1 subfamily. As to quaternary structure, interacts with PCNA. Three molecules of FEN1 bind to one PCNA trimer with each molecule binding to one PCNA monomer. PCNA stimulates the nuclease activity without altering cleavage specificity. The cofactor is Mg(2+). In terms of processing, phosphorylated. Phosphorylation upon DNA damage induces relocalization to the nuclear plasma.

It localises to the nucleus. The protein resides in the nucleolus. It is found in the nucleoplasm. The protein localises to the mitochondrion. In terms of biological role, structure-specific nuclease with 5'-flap endonuclease and 5'-3' exonuclease activities involved in DNA replication and repair. During DNA replication, cleaves the 5'-overhanging flap structure that is generated by displacement synthesis when DNA polymerase encounters the 5'-end of a downstream Okazaki fragment. It enters the flap from the 5'-end and then tracks to cleave the flap base, leaving a nick for ligation. Also involved in the long patch base excision repair (LP-BER) pathway, by cleaving within the apurinic/apyrimidinic (AP) site-terminated flap. Acts as a genome stabilization factor that prevents flaps from equilibrating into structures that lead to duplications and deletions. Also possesses 5'-3' exonuclease activity on nicked or gapped double-stranded DNA, and exhibits RNase H activity. Also involved in replication and repair of rDNA and in repairing mitochondrial DNA. This Cryptococcus neoformans var. neoformans serotype D (strain B-3501A) (Filobasidiella neoformans) protein is Flap endonuclease 1.